The following is a 735-amino-acid chain: MIPPQEASARRREIEDKLKQEEETLSFIRDSLEKSDQLTKNMVSILSSFESRLMKLENSIIPVHKQTENLQRLQENVEKTLSCLDHVISYYHVASDTEKIIREGPTGRLEEYLGSMAKIQKAVEYFQDNSPDSPELNKVKLLFERGKEALESEFRSLMTRHSKVVSPVLILDLISGDDDLEAQEDVTLEHLPESVLQDVIRISRWLVEYGRNQDFMNVYYQIRSSQLDRSIKGLKEHFHKSSSSSGVPYSPAIPNKRKDTPTKKPVKRPGTIRKAQNLLKQYSQHGLDGKKGGSNLIPLEGLLPCTPRGGLPGPWINAACVCAADISPGHEHDFRVKHLSEALNDKHGPLAGRDDMLDVETDAYIHCVSAFVKLAQSEYQLLADIIPEHHQKKTFDSLIQDALDGLMLEGENIVSAARKAIVRHDFSTVLTVFPILRHLKQTKPEFDQVLQGTAASTKNKLPGLITSMETIGAKALEDFADNIKNDPDKEYNMPKDGTVHELTSNAILFLQQLLDFQETAGAMLASQETSSSATSYSSEFSKRLLSTYICKVLGNLQLNLLSKSKVYEDPALSAIFLHNNYNYILKSLEKSELIQLVAVTQKTAERSYREHIEQQIQTYQRSWLKVTDYIAEKNLPVFQPGVKLRDKERQIIKERFKGFNDGLEELCKIQKAWAIPDTEQRDRIRQAQKTIVKETYGAFLQKFGSVPFTKNPEKYIKYGVEQVGDMIDRLFDTSA.

Coiled coils occupy residues Gln-5–Met-42 and Val-63–Asp-85. The residue at position 133 (Ser-133) is a Phosphoserine. Residues His-239–Arg-268 form a disordered region.

The protein belongs to the EXO70 family. In terms of assembly, the exocyst complex is composed of EXOC1, EXOC2, EXOC3, EXOC4, EXOC5, EXOC6, EXOC7 and EXOC8. Interacts with ARHQ in a GTP-dependent manner. Interacts with RAB11FIP3. As to expression, abundant in the ventricular zone, the outer subventricular zone and the cortical plate of the fetal cortex.

It localises to the cytoplasm. Its subcellular location is the cytosol. The protein localises to the cell membrane. The protein resides in the midbody. It is found in the midbody ring. Functionally, component of the exocyst complex involved in the docking of exocytic vesicles with fusion sites on the plasma membrane. In adipocytes, plays a crucial role in targeting SLC2A4 vesicle to the plasma membrane in response to insulin, perhaps directing the vesicle to the precise site of fusion. It is required for neuron survival and plays an essential role in cortical development. The protein is Exocyst complex component 7 (EXOC7) of Homo sapiens (Human).